The sequence spans 101 residues: Small ribosomal subunit protein bS18c (101 aa).

This sequence belongs to the bacterial ribosomal protein bS18 family. As to quaternary structure, part of the 30S ribosomal subunit.

The protein resides in the plastid. Its subcellular location is the chloroplast. The chain is Small ribosomal subunit protein bS18c from Gossypium hirsutum (Upland cotton).